We begin with the raw amino-acid sequence, 356 residues long: DNA polymerase IV (356 aa).

The region spanning 6 to 187 (IIHIDMDYFF…LDIGDFPGVG (182 aa)) is the UmuC domain. Residues aspartate 10 and aspartate 105 each coordinate Mg(2+). The active site involves glutamate 106.

It belongs to the DNA polymerase type-Y family. As to quaternary structure, monomer. Requires Mg(2+) as cofactor.

Its subcellular location is the cytoplasm. It catalyses the reaction DNA(n) + a 2'-deoxyribonucleoside 5'-triphosphate = DNA(n+1) + diphosphate. Functionally, poorly processive, error-prone DNA polymerase involved in untargeted mutagenesis. Copies undamaged DNA at stalled replication forks, which arise in vivo from mismatched or misaligned primer ends. These misaligned primers can be extended by PolIV. Exhibits no 3'-5' exonuclease (proofreading) activity. May be involved in translesional synthesis, in conjunction with the beta clamp from PolIII. The polypeptide is DNA polymerase IV (Staphylococcus aureus (strain MRSA252)).